Reading from the N-terminus, the 584-residue chain is Asparagine synthetase [glutamine-hydrolyzing] 1 (584 aa).

Residue C2 is the For GATase activity of the active site. The region spanning 2–185 (CGILAVLGCS…PGHFYSSKLG (184 aa)) is the Glutamine amidotransferase type-2 domain. L-glutamine contacts are provided by residues 50–54 (RLAVI), 75–77 (NGE), and D98. The region spanning 193–516 (PPWFNESVPS…PQNSARLTVP (324 aa)) is the Asparagine synthetase domain. Residues L231, V267, and 341-342 (SG) contribute to the ATP site.

The catalysed reaction is L-aspartate + L-glutamine + ATP + H2O = L-asparagine + L-glutamate + AMP + diphosphate + H(+). It participates in amino-acid biosynthesis; L-asparagine biosynthesis; L-asparagine from L-aspartate (L-Gln route): step 1/1. Functionally, essential for nitrogen assimilation, distribution and remobilization within the plant via the phloem. The polypeptide is Asparagine synthetase [glutamine-hydrolyzing] 1 (ASN1) (Arabidopsis thaliana (Mouse-ear cress)).